The following is an 81-amino-acid chain: Defensin-like protein 266 (81 aa).

The N-terminal stretch at 1 to 26 (MEKIVFRKIVFVAFLLSLSCLLEGEA) is a signal peptide. 3 disulfides stabilise this stretch: Cys40–Cys58, Cys46–Cys63, and Cys50–Cys65.

It belongs to the DEFL family.

Its subcellular location is the secreted. The sequence is that of Defensin-like protein 266 from Arabidopsis thaliana (Mouse-ear cress).